The following is a 264-amino-acid chain: Thymidylate synthase (264 aa).

Arg-21 is a dUMP binding site. Residue His-51 coordinates (6R)-5,10-methylene-5,6,7,8-tetrahydrofolate. Position 126–127 (126–127 (RR)) interacts with dUMP. Cys-146 acts as the Nucleophile in catalysis. DUMP-binding positions include 166-169 (RSAD), Asn-177, and 207-209 (HIY). Asp-169 lines the (6R)-5,10-methylene-5,6,7,8-tetrahydrofolate pocket. Ser-263 serves as a coordination point for (6R)-5,10-methylene-5,6,7,8-tetrahydrofolate.

It belongs to the thymidylate synthase family. Bacterial-type ThyA subfamily. Homodimer.

The protein resides in the cytoplasm. The enzyme catalyses dUMP + (6R)-5,10-methylene-5,6,7,8-tetrahydrofolate = 7,8-dihydrofolate + dTMP. It participates in pyrimidine metabolism; dTTP biosynthesis. Functionally, catalyzes the reductive methylation of 2'-deoxyuridine-5'-monophosphate (dUMP) to 2'-deoxythymidine-5'-monophosphate (dTMP) while utilizing 5,10-methylenetetrahydrofolate (mTHF) as the methyl donor and reductant in the reaction, yielding dihydrofolate (DHF) as a by-product. This enzymatic reaction provides an intracellular de novo source of dTMP, an essential precursor for DNA biosynthesis. The protein is Thymidylate synthase of Halalkalibacterium halodurans (strain ATCC BAA-125 / DSM 18197 / FERM 7344 / JCM 9153 / C-125) (Bacillus halodurans).